The chain runs to 312 residues: tRNA pseudouridine synthase B (312 aa).

Asp47 (nucleophile) is an active-site residue.

Belongs to the pseudouridine synthase TruB family. Type 1 subfamily.

The enzyme catalyses uridine(55) in tRNA = pseudouridine(55) in tRNA. Functionally, responsible for synthesis of pseudouridine from uracil-55 in the psi GC loop of transfer RNAs. The polypeptide is tRNA pseudouridine synthase B (Vibrio cholerae serotype O1 (strain M66-2)).